A 76-amino-acid polypeptide reads, in one-letter code: Large ribosomal subunit protein bL31 (76 aa).

It belongs to the bacterial ribosomal protein bL31 family. Type A subfamily. In terms of assembly, part of the 50S ribosomal subunit.

Binds the 23S rRNA. The chain is Large ribosomal subunit protein bL31 from Methylocella silvestris (strain DSM 15510 / CIP 108128 / LMG 27833 / NCIMB 13906 / BL2).